Reading from the N-terminus, the 393-residue chain is Protein DDI1 homolog 2 (393 aa).

A Ubiquitin-like domain is found at 1 to 81; it reads MLITVYCVRR…VILRQKEAPE (81 aa). The segment at 82-127 is disordered; the sequence is TRPAAPFPGLDFSTIAVPGASSQPDPSQPQAPPPPPDTSSFPQGLD. Pro residues predominate over residues 107-118; that stretch reads PSQPQAPPPPPD. The active site involves D246. The Ubiquitin-binding signature appears at 370-389; that stretch reads EEIADRELAEVLQKSADEAD.

This sequence belongs to the DDI1 family. Homodimer.

It localises to the cytoplasm. The protein resides in the cytosol. It is found in the chromosome. In terms of biological role, aspartic protease that mediates the cleavage of NFE2L1/NRF1 at 'Leu-104', thereby promoting release of NFE2L1/NRF1 from the endoplasmic reticulum membrane. Ubiquitination of NFE2L1/NRF1 is a prerequisite for cleavage, suggesting that DDI2 specifically recognizes and binds ubiquitinated NFE2L1/NRF1. Seems to act as a proteasomal shuttle which links the proteasome and replication fork proteins like RTF2. Required for cellular survival following replication stress. In Xenopus laevis (African clawed frog), this protein is Protein DDI1 homolog 2 (ddi2).